Reading from the N-terminus, the 391-residue chain is Lipid-A-disaccharide synthase (391 aa).

It belongs to the LpxB family.

It carries out the reaction a lipid X + a UDP-2-N,3-O-bis[(3R)-3-hydroxyacyl]-alpha-D-glucosamine = a lipid A disaccharide + UDP + H(+). The protein operates within bacterial outer membrane biogenesis; LPS lipid A biosynthesis. Functionally, condensation of UDP-2,3-diacylglucosamine and 2,3-diacylglucosamine-1-phosphate to form lipid A disaccharide, a precursor of lipid A, a phosphorylated glycolipid that anchors the lipopolysaccharide to the outer membrane of the cell. The protein is Lipid-A-disaccharide synthase of Rickettsia akari (strain Hartford).